Here is a 106-residue protein sequence, read N- to C-terminus: Toxin-like structure LSTX-D6 (106 aa).

Residues Met-1–Ser-20 form the signal peptide. Residues Glu-21–Arg-41 constitute a propeptide that is removed on maturation. Disulfide bonds link Cys-45–Cys-60, Cys-52–Cys-69, Cys-59–Cys-85, and Cys-71–Cys-83.

Belongs to the neurotoxin 19 (CSTX) family. 02 (D7) subfamily. In terms of tissue distribution, expressed by the venom gland.

Its subcellular location is the secreted. The polypeptide is Toxin-like structure LSTX-D6 (Lycosa singoriensis (Wolf spider)).